Reading from the N-terminus, the 73-residue chain is MRKLLVSFLCACIIFYQKAISPHFPPSCRYEPTCSQYAIESIKKYGPFKGAGMALLRILRCNPLCKGGYDPVP.

This sequence belongs to the UPF0161 family.

It is found in the cell inner membrane. Its function is as follows. Could be involved in insertion of integral membrane proteins into the membrane. This is Putative membrane protein insertion efficiency factor from Treponema denticola (strain ATCC 35405 / DSM 14222 / CIP 103919 / JCM 8153 / KCTC 15104).